The sequence spans 510 residues: Glutamate decarboxylase (510 aa).

107 to 109 (QLS) contacts substrate. Lysine 322 carries the post-translational modification N6-(pyridoxal phosphate)lysine. Arginine 483 serves as a coordination point for substrate.

Belongs to the group II decarboxylase family. As to quaternary structure, homodimer. Pyridoxal 5'-phosphate serves as cofactor. Expressed in the head (at protein level).

The catalysed reaction is L-glutamate + H(+) = 4-aminobutanoate + CO2. Functionally, catalyzes the production of GABA. This is Glutamate decarboxylase (Gad1) from Drosophila melanogaster (Fruit fly).